A 512-amino-acid polypeptide reads, in one-letter code: GMP synthase [glutamine-hydrolyzing] (512 aa).

Residues 7 to 197 (TIIVLDFGSQ…VFGVCGCSEG (191 aa)) enclose the Glutamine amidotransferase type-1 domain. Catalysis depends on cysteine 84, which acts as the Nucleophile. Catalysis depends on residues histidine 171 and glutamate 173. The region spanning 198 to 387 (WNMENFIEVE…LGIPDEIVWR (190 aa)) is the GMPS ATP-PPase domain. 225-231 (SGGVDSS) contacts ATP.

In terms of assembly, homodimer.

It carries out the reaction XMP + L-glutamine + ATP + H2O = GMP + L-glutamate + AMP + diphosphate + 2 H(+). It functions in the pathway purine metabolism; GMP biosynthesis; GMP from XMP (L-Gln route): step 1/1. Its function is as follows. Catalyzes the synthesis of GMP from XMP. The sequence is that of GMP synthase [glutamine-hydrolyzing] from Bacillus anthracis.